A 593-amino-acid chain; its full sequence is Trehalose synthase/amylase TreS (593 aa).

Residue Asp-90 coordinates substrate. Asn-132 serves as a coordination point for Ca(2+). Substrate is bound by residues His-133 and Gln-198. Asp-200 provides a ligand contact to Ca(2+). Arg-228 lines the substrate pocket. Asp-230 acts as the Nucleophile in catalysis. Tyr-234, Leu-235, and Glu-237 together coordinate Ca(2+). Residue Glu-272 is the Proton donor of the active site. Substrate-binding residues include His-341 and Asp-342.

The protein belongs to the glycosyl hydrolase 13 family. TreS subfamily. Homohexamer.

It carries out the reaction D-maltose = alpha,alpha-trehalose. The enzyme catalyses Endohydrolysis of (1-&gt;4)-alpha-D-glucosidic linkages in polysaccharides containing three or more (1-&gt;4)-alpha-linked D-glucose units.. The protein operates within glycan biosynthesis; glycogen biosynthesis. With respect to regulation, the amylase activity is stimulated by addition of Ca(2+), but this cation and other divalent cations inhibit the trehalose synthase activity. In addition, trehalose synthase activity, but not amylase activity, is strongly inhibited, and in a competitive manner, by validoxylamine. On the other hand, amylase, but not trehalose synthase activity, is inhibited by the known transition-state amylase inhibitor, acarbose, suggesting the possibility of two different active sites. Other metal ions such as Mg(2+), Mn(2+), and Co(2+) are also somewhat effective in the stimulation of amylase activity, but Hg(2+), Cu(2+), Ni(2+) and Zn(2+) are inhibitory. Catalyzes the reversible interconversion of maltose and trehalose by transglucosylation. Maltose is the preferred substrate. To a lesser extent, also displays amylase activity, catalyzing the endohydrolysis of (1-&gt;4)-alpha-D-glucosidic linkages in glycogen and maltooligosaccharides such as maltoheptaose, to produce maltose which then can be converted to trehalose. TreS plays a key role in the utilization of trehalose for the production of glycogen and alpha-glucan via the TreS-Pep2 branch involved in the biosynthesis of maltose-1-phosphate (M1P). Might also function as a sensor and/or regulator of trehalose levels within the cell. Thus, when trehalose levels in the cell become dangerously low, TreS can expedite the conversion of glycogen to maltose via its amylase activity and then convert the maltose to trehalose; but this enzyme also can expedite or promote the conversion of trehalose to glycogen when cytoplasmic trehalose levels become too high. Is also able to catalyze the hydrolytic cleavage of alpha-aryl glucosides, as well as alpha-glucosyl fluoride in vitro. The chain is Trehalose synthase/amylase TreS from Mycolicibacterium smegmatis (strain ATCC 700084 / mc(2)155) (Mycobacterium smegmatis).